Reading from the N-terminus, the 323-residue chain is tRNA dimethylallyltransferase (323 aa).

27–34 lines the ATP pocket; it reads GPTGSGKT. 29-34 contributes to the substrate binding site; the sequence is TGSGKT. Interaction with substrate tRNA stretches follow at residues 52–55 and 176–180; these read DSRQ and QRIVR.

The protein belongs to the IPP transferase family. Monomer. Mg(2+) serves as cofactor.

The catalysed reaction is adenosine(37) in tRNA + dimethylallyl diphosphate = N(6)-dimethylallyladenosine(37) in tRNA + diphosphate. Its function is as follows. Catalyzes the transfer of a dimethylallyl group onto the adenine at position 37 in tRNAs that read codons beginning with uridine, leading to the formation of N6-(dimethylallyl)adenosine (i(6)A). This is tRNA dimethylallyltransferase from Desulfovibrio desulfuricans (strain ATCC 27774 / DSM 6949 / MB).